A 32-amino-acid polypeptide reads, in one-letter code: U6-ctenitoxin-Pr1a (32 aa).

3 disulfide bridges follow: cysteine 3–cysteine 17, cysteine 10–cysteine 21, and cysteine 16–cysteine 30.

In terms of tissue distribution, expressed by the venom gland.

It localises to the secreted. The protein is U6-ctenitoxin-Pr1a of Phoneutria reidyi (Brazilian Amazonian armed spider).